The following is a 189-amino-acid chain: Large ribosomal subunit protein eL18 (189 aa).

The protein belongs to the eukaryotic ribosomal protein eL18 family.

The protein localises to the cytoplasm. The chain is Large ribosomal subunit protein eL18 (RpL18) from Anopheles gambiae (African malaria mosquito).